Consider the following 470-residue polypeptide: Ribosomal protein uS12 methylthiotransferase RimO (470 aa).

Residues 33 to 143 enclose the MTTase N-terminal domain; it reads NKIGFVSLGC…VLEHVHQYAP (111 aa). The [4Fe-4S] cluster site is built by Cys-42, Cys-78, Cys-107, Cys-175, Cys-179, and Cys-182. The Radical SAM core domain maps to 161-398; it reads LTPKHYAYLK…MLVQQEISAA (238 aa). Residues 401-467 form the TRAM domain; sequence QKRIGSTMQV…EYDLWGSILH (67 aa).

It belongs to the methylthiotransferase family. RimO subfamily. It depends on [4Fe-4S] cluster as a cofactor.

The protein localises to the cytoplasm. The catalysed reaction is L-aspartate(89)-[ribosomal protein uS12]-hydrogen + (sulfur carrier)-SH + AH2 + 2 S-adenosyl-L-methionine = 3-methylsulfanyl-L-aspartate(89)-[ribosomal protein uS12]-hydrogen + (sulfur carrier)-H + 5'-deoxyadenosine + L-methionine + A + S-adenosyl-L-homocysteine + 2 H(+). Its function is as follows. Catalyzes the methylthiolation of an aspartic acid residue of ribosomal protein uS12. The sequence is that of Ribosomal protein uS12 methylthiotransferase RimO from Vibrio cholerae serotype O1 (strain ATCC 39315 / El Tor Inaba N16961).